We begin with the raw amino-acid sequence, 154 residues long: Superoxide dismutase [Cu-Zn] (154 aa).

Cu cation-binding residues include His-45, His-47, and His-62. An intrachain disulfide couples Cys-56 to Cys-146. Zn(2+)-binding residues include His-62, His-70, His-79, and Asp-82. His-120 is a binding site for Cu cation.

It belongs to the Cu-Zn superoxide dismutase family. As to quaternary structure, homodimer. Cu cation is required as a cofactor. The cofactor is Zn(2+).

The protein resides in the cytoplasm. The enzyme catalyses 2 superoxide + 2 H(+) = H2O2 + O2. Destroys radicals which are normally produced within the cells and which are toxic to biological systems. In Bombyx mori (Silk moth), this protein is Superoxide dismutase [Cu-Zn].